We begin with the raw amino-acid sequence, 308 residues long: Olfactory receptor 5H19 (308 aa).

The Extracellular portion of the chain corresponds to 1–27; the sequence is MEKNATLLTEFVLTGLSHQPLWNIPLF. N-linked (GlcNAc...) asparagine glycosylation is present at N4. Residues 28–48 traverse the membrane as a helical segment; it reads LVFLVIYLITIVGNVSLITLI. Residues 49–55 lie on the Cytoplasmic side of the membrane; the sequence is WTDPHLH. A helical transmembrane segment spans residues 56-76; that stretch reads IPMYLFLGSLAFVDTSISSIV. Residues 77-92 are Extracellular-facing; that stretch reads VPKMLLNFFGKSKVIT. The helical transmembrane segment at 93–113 threads the bilayer; it reads LSECMAQFFLFNISATTECFL. A disulfide bridge connects residues C96 and C188. The Cytoplasmic segment spans residues 114 to 143; sequence LAAMAYDRYVAICKPLLYPVVMTNGLCVWL. Residues 144 to 164 traverse the membrane as a helical segment; the sequence is IALSFVAGIIHALIHEGFLLR. The Extracellular segment spans residues 165–197; sequence LTFCNSNMIHNFYCDIISLLKISCTDTSLNYLI. Residues 198 to 218 traverse the membrane as a helical segment; sequence VFIFSGSIQVFTISTILVSYT. The Cytoplasmic segment spans residues 219–238; that stretch reads IILFTILKKKSAKGIKKAFS. A helical transmembrane segment spans residues 239 to 259; it reads TCGAHLLSVSLYYGPLLFMYV. Residues 260–270 lie on the Extracellular side of the membrane; it reads HPASSEVDDQD. Residues 271 to 291 traverse the membrane as a helical segment; sequence MIDSLFYTVIIPVLNPIIYSL. Residues 292–308 are Cytoplasmic-facing; it reads RNKQVIDSLAKFLKRNV.

The protein belongs to the G-protein coupled receptor 1 family.

It is found in the cell membrane. Functionally, potential odorant receptor. The chain is Olfactory receptor 5H19 from Mus musculus (Mouse).